The primary structure comprises 261 residues: RING finger protein 208 (261 aa).

The segment at 83–106 is disordered; that stretch reads PALEGAPHTPPLPRRPRKGSSELG. Phosphoserine is present on Ser102. Residues 143–190 form an RING-type zinc finger; it reads CPTCGHSYNVTQRRPRVLSCLHSVCEQCLQILYESCPKYKFISCPTCR.

This is RING finger protein 208 (RNF208) from Homo sapiens (Human).